A 286-amino-acid chain; its full sequence is Bifunctional protein FolD (286 aa).

Residues 164-166 (GRS), Ser193, and Ile234 contribute to the NADP(+) site.

It belongs to the tetrahydrofolate dehydrogenase/cyclohydrolase family. As to quaternary structure, homodimer.

It carries out the reaction (6R)-5,10-methylene-5,6,7,8-tetrahydrofolate + NADP(+) = (6R)-5,10-methenyltetrahydrofolate + NADPH. The catalysed reaction is (6R)-5,10-methenyltetrahydrofolate + H2O = (6R)-10-formyltetrahydrofolate + H(+). It participates in one-carbon metabolism; tetrahydrofolate interconversion. Catalyzes the oxidation of 5,10-methylenetetrahydrofolate to 5,10-methenyltetrahydrofolate and then the hydrolysis of 5,10-methenyltetrahydrofolate to 10-formyltetrahydrofolate. This is Bifunctional protein FolD from Maridesulfovibrio salexigens (strain ATCC 14822 / DSM 2638 / NCIMB 8403 / VKM B-1763) (Desulfovibrio salexigens).